We begin with the raw amino-acid sequence, 306 residues long: Homoserine kinase (306 aa).

84 to 94 (PAGLGLGSSGA) contacts ATP.

It belongs to the GHMP kinase family. Homoserine kinase subfamily.

It localises to the cytoplasm. The enzyme catalyses L-homoserine + ATP = O-phospho-L-homoserine + ADP + H(+). The protein operates within amino-acid biosynthesis; L-threonine biosynthesis; L-threonine from L-aspartate: step 4/5. Its function is as follows. Catalyzes the ATP-dependent phosphorylation of L-homoserine to L-homoserine phosphate. The polypeptide is Homoserine kinase (Sulfolobus acidocaldarius (strain ATCC 33909 / DSM 639 / JCM 8929 / NBRC 15157 / NCIMB 11770)).